Consider the following 1896-residue polypeptide: Trinucleotide repeat-containing gene 6A protein (1896 aa).

2 stretches are compositionally biased toward basic and acidic residues: residues 1 to 21 (MREL…RDLV) and 39 to 57 (KKKE…KVPE). Disordered regions lie at residues 1 to 137 (MREL…LLKR), 159 to 209 (SESS…DCST), 222 to 250 (EAWP…SESE), and 257 to 276 (ASGN…GLGS). The segment at 1–917 (MRELEAKATK…GDPPKCNQSL (917 aa)) is interaction with argonaute family proteins. Composition is skewed to low complexity over residues 69–93 (ANSD…ASNQ) and 101–113 (QQPQ…QQPQ). A compositionally biased stretch (basic residues) spans 125 to 137 (RFRHQEHKQLLKR). The interval 239-488 (IDADSASNSE…QAPSVMNGTS (250 aa)) is sufficient for interaction with AGO1, AGO3 and AGO4. Sufficient for interaction with AGO2 stretches follow at residues 255 to 331 (VMAS…NAWG), 303 to 384 (GALI…STIG), 325 to 424 (NRMN…KVSF), 394 to 480 (SKVS…QIQA), and 487 to 736 (TSLS…NGTE). 2 stretches are compositionally biased toward polar residues: residues 396 to 410 (VSGS…SLQE) and 417 to 429 (SGTQ…GQPQ). 5 disordered regions span residues 396–461 (VSGS…NELP), 548–683 (FQVN…RRKI), 703–998 (LSNS…DPSK), 1011–1126 (IPEA…PTGW), and 1143–1182 (QELN…NKQE). Residues 430–443 (NITTETTGPNNTTN) show a composition bias toward low complexity. Polar residues predominate over residues 444-461 (FMTSSLPNSGSVQNNELP). Residues 551–1279 (NTNKGGGVWE…MFGVGNTAAQ (729 aa)) are sufficient for interaction with AGO1 and AGO4. Residues 573 to 584 (SGNGANSGGSRR) show a composition bias toward gly residues. Polar residues-rich tracts occupy residues 591 to 617 (QNTG…SANG) and 635 to 647 (GSAT…QNSV). Over residues 665-683 (GRLEEKVTGESQSRDRRKI) the composition is skewed to basic and acidic residues. The span at 703–722 (LSNSGWGQTPIKQNTAWDTE) shows a compositional bias: polar residues. The span at 723–733 (TSPRGERKTDN) shows a compositional bias: basic and acidic residues. Residue Ser724 is modified to Phosphoserine. The span at 738–766 (WGSSATQTFNSGACTDKTSPNSNDTSSVS) shows a compositional bias: polar residues. Low complexity predominate over residues 858 to 871 (SSSGGSDSDRSISG). Ser863 is modified (phosphoserine). 2 stretches are compositionally biased toward polar residues: residues 876–906 (GKTS…SSQG) and 924–937 (KPVS…QQDI). Ser976 carries the post-translational modification Phosphoserine. Polar residues-rich tracts occupy residues 1033–1042 (AVSSKETSSG), 1054–1064 (TPATTVDNGTS), and 1082–1105 (AASN…SGPK). Residues 1059–1129 (VDNGTSAWGK…GSRPTGWEEE (71 aa)) are sufficient for interaction with AGO2. The span at 1143–1163 (QELNSSLNWPPYTKKMSSKGL) shows a compositional bias: low complexity. Ser1197 and Ser1255 each carry phosphoserine. 3 disordered regions span residues 1234–1256 (GDYN…ESSM), 1273–1306 (VGNT…PPPL), and 1360–1395 (QRAQ…QSRQ). Low complexity-rich tracts occupy residues 1284 to 1296 (QQPP…SSQP) and 1360 to 1376 (QRAQ…RQQQ). Thr1406 carries the post-translational modification Phosphothreonine. Disordered regions lie at residues 1512-1570 (MNSS…VTPG) and 1659-1685 (PKNI…WDNS). At Ser1520 the chain carries Phosphoserine. The sufficient for interaction with AGO2 stretch occupies residues 1605–1896 (TSAWSSIRAS…DHLGGGGESM (292 aa)). Residues 1716 to 1788 (NWLVLKNLTP…TTILAEFASE (73 aa)) enclose the RRM domain. Ser1804 and Ser1825 each carry phosphoserine.

The protein belongs to the GW182 family. Interacts with AGO2. Interacts with AGO1, AGO3 and AGO4. Interacts with CNOT1; the interaction is direct and mediates the association with the CCR4-NOT complex. Interacts with ZC3H12A. Interacts with SND1. Interacts with GARRE1.

The protein resides in the cytoplasm. It localises to the P-body. Functionally, plays a role in RNA-mediated gene silencing by both micro-RNAs (miRNAs) and short interfering RNAs (siRNAs). Required for miRNA-dependent repression of translation and for siRNA-dependent endonucleolytic cleavage of complementary mRNAs by argonaute family proteins. As a scaffolding protein, associates with argonaute proteins bound to partially complementary mRNAs, and can simultaneously recruit CCR4-NOT and PAN deadenylase complexes. This is Trinucleotide repeat-containing gene 6A protein (Tnrc6a) from Mus musculus (Mouse).